We begin with the raw amino-acid sequence, 471 residues long: Extracellular endo-alpha-(1-&gt;5)-L-arabinanase (471 aa).

Residues 1–19 (MRFLFLMITLTALTGYILA) form the signal peptide. The active-site Proton acceptor is the Asp-32. Residues Asp-32, Gly-117, 167–170 (NALD), 187–189 (SWF), and 219–223 (HSSME) each bind substrate. Glu-223 (proton donor) is an active-site residue. Ca(2+) is bound at residue His-314.

This sequence belongs to the glycosyl hydrolase 43 family. In terms of assembly, monomer. It depends on Ca(2+) as a cofactor.

It localises to the secreted. It carries out the reaction Endohydrolysis of (1-&gt;5)-alpha-arabinofuranosidic linkages in (1-&gt;5)-arabinans.. It functions in the pathway glycan metabolism; L-arabinan degradation. Its function is as follows. Involved in the degradation of arabinan and is a key enzyme in the complete degradation of the plant cell wall. Catalyzes the internal cleavage of alpha-(1-&gt;5)-L-arabinofuranosyl residues in different arabinan-containing polysaccharides, and releases arabinotriose and arabinobiose as end products. It acts on branched arabinan (from sugar beet), but more slowly when compared to linear or debranched arabinan. The sequence is that of Extracellular endo-alpha-(1-&gt;5)-L-arabinanase from Thermotoga petrophila (strain ATCC BAA-488 / DSM 13995 / JCM 10881 / RKU-1).